The chain runs to 469 residues: 3-isopropylmalate dehydratase large subunit (469 aa).

Residues C349, C410, and C413 each contribute to the [4Fe-4S] cluster site.

Belongs to the aconitase/IPM isomerase family. LeuC type 1 subfamily. As to quaternary structure, heterodimer of LeuC and LeuD. [4Fe-4S] cluster serves as cofactor.

The enzyme catalyses (2R,3S)-3-isopropylmalate = (2S)-2-isopropylmalate. It functions in the pathway amino-acid biosynthesis; L-leucine biosynthesis; L-leucine from 3-methyl-2-oxobutanoate: step 2/4. Functionally, catalyzes the isomerization between 2-isopropylmalate and 3-isopropylmalate, via the formation of 2-isopropylmaleate. The sequence is that of 3-isopropylmalate dehydratase large subunit from Aromatoleum aromaticum (strain DSM 19018 / LMG 30748 / EbN1) (Azoarcus sp. (strain EbN1)).